Consider the following 339-residue polypeptide: Tetraacyldisaccharide 4'-kinase (339 aa).

61-68 (TAGGTGKT) contacts ATP.

It belongs to the LpxK family.

The enzyme catalyses a lipid A disaccharide + ATP = a lipid IVA + ADP + H(+). Its pathway is glycolipid biosynthesis; lipid IV(A) biosynthesis; lipid IV(A) from (3R)-3-hydroxytetradecanoyl-[acyl-carrier-protein] and UDP-N-acetyl-alpha-D-glucosamine: step 6/6. Transfers the gamma-phosphate of ATP to the 4'-position of a tetraacyldisaccharide 1-phosphate intermediate (termed DS-1-P) to form tetraacyldisaccharide 1,4'-bis-phosphate (lipid IVA). This Stenotrophomonas maltophilia (strain R551-3) protein is Tetraacyldisaccharide 4'-kinase.